The sequence spans 236 residues: MEKPDPKVIVAIDAGTVEQARAQINPLTPELCHLKIGSILFTRYGPAFVEELMQKGYRIFLDLKFYDIPQTVAGACRAVAELGVWMMNIHISGGRTMMETVVNALQSITLKEKPLLIGVTILTSLDGSDLKTLGIQEKVPDIVCRMATLAKSAGLDGVVCSAQEAALLRKQFDRNFLLVTPGIRLETDEKGDQKRVMTPRAAIQAGSDYLVIGRPITQSTDPLKALEAIDKDIKTR.

Substrate contacts are provided by residues D13, K35, 62–71, T123, R184, Q193, G213, and R214; that span reads DLKFYDIPQT. The active-site Proton donor is K64.

It belongs to the OMP decarboxylase family. Type 1 subfamily. Homodimer.

The enzyme catalyses orotidine 5'-phosphate + H(+) = UMP + CO2. The protein operates within pyrimidine metabolism; UMP biosynthesis via de novo pathway; UMP from orotate: step 2/2. In terms of biological role, catalyzes the decarboxylation of orotidine 5'-monophosphate (OMP) to uridine 5'-monophosphate (UMP). The chain is Orotidine 5'-phosphate decarboxylase from Coxiella burnetii (strain CbuK_Q154) (Coxiella burnetii (strain Q154)).